Consider the following 146-residue polypeptide: Large ribosomal subunit protein uL15 (146 aa).

Over residues 1–18 (MKLHELKAAEGTRKERNR) the composition is skewed to basic and acidic residues. Residues 1 to 58 (MKLHELKAAEGTRKERNRVGRGMSSGNGKTSGRGHKGQKARSGGGVRPGFEGGQMPLF) are disordered. Residues 42–52 (SGGGVRPGFEG) show a composition bias toward gly residues.

It belongs to the universal ribosomal protein uL15 family. Part of the 50S ribosomal subunit.

Its function is as follows. Binds to the 23S rRNA. This is Large ribosomal subunit protein uL15 from Oceanobacillus iheyensis (strain DSM 14371 / CIP 107618 / JCM 11309 / KCTC 3954 / HTE831).